A 455-amino-acid polypeptide reads, in one-letter code: Chromosomal replication initiator protein DnaA (455 aa).

The segment at 1–74 (MFNFEKFWQH…IQSAYGYAGV (74 aa)) is domain I, interacts with DnaA modulators. The tract at residues 74–117 (VELLPVFQISEDSDTPERIVTPEPQHNLQTTPTRAPQREFAKDL) is domain II. The interval 118–334 (KLNEKYTFDN…GALVKVQAYA (217 aa)) is domain III, AAA+ region. ATP is bound by residues G162, G164, K165, and T166. The interval 335–455 (TIEKADIDIN…VFDLKQMLEH (121 aa)) is domain IV, binds dsDNA.

Belongs to the DnaA family. In terms of assembly, oligomerizes as a right-handed, spiral filament on DNA at oriC.

It is found in the cytoplasm. Plays an essential role in the initiation and regulation of chromosomal replication. ATP-DnaA binds to the origin of replication (oriC) to initiate formation of the DNA replication initiation complex once per cell cycle. Binds the DnaA box (a 9 base pair repeat at the origin) and separates the double-stranded (ds)DNA. Forms a right-handed helical filament on oriC DNA; dsDNA binds to the exterior of the filament while single-stranded (ss)DNA is stabiized in the filament's interior. The ATP-DnaA-oriC complex binds and stabilizes one strand of the AT-rich DNA unwinding element (DUE), permitting loading of DNA polymerase. After initiation quickly degrades to an ADP-DnaA complex that is not apt for DNA replication. Binds acidic phospholipids. The polypeptide is Chromosomal replication initiator protein DnaA (Lactobacillus acidophilus (strain ATCC 700396 / NCK56 / N2 / NCFM)).